Consider the following 188-residue polypeptide: Ribosome maturation factor RimM (188 aa).

The PRC barrel domain maps to 98–171 (EGEFFQGDLV…RIVIHPPEYV (74 aa)).

This sequence belongs to the RimM family. As to quaternary structure, binds ribosomal protein uS19.

The protein resides in the cytoplasm. Its function is as follows. An accessory protein needed during the final step in the assembly of 30S ribosomal subunit, possibly for assembly of the head region. Essential for efficient processing of 16S rRNA. May be needed both before and after RbfA during the maturation of 16S rRNA. It has affinity for free ribosomal 30S subunits but not for 70S ribosomes. This Myxococcus xanthus (strain DK1622) protein is Ribosome maturation factor RimM.